Consider the following 297-residue polypeptide: MTFQDIIMTLQKFWVEKGCILWQPYDIEVGAGTMNPATFLRVLGPEPWNVCYVEPSRRPKDGRYGENPNRLQHYYQFQVILKPTPENPHELYLESLQALGIDLTMHDIRFVEDDWESPTLGAWGLGWEVWLDGMEITQFTYFQQAGSLDLPEISVEITYGLERIATYLQGKDSVYDIVWAEGLTYGDIYKEAERQWSIHNFEVVDVDFLIKTFDMYEQEGYKLISLNLPIPAYDYALKCSHTFNLLDARGALSVNERARYIARVRNLARECAKAFVKHREELGYPLIKRRDDEVLST.

Belongs to the class-II aminoacyl-tRNA synthetase family. Tetramer of two alpha and two beta subunits.

It is found in the cytoplasm. The enzyme catalyses tRNA(Gly) + glycine + ATP = glycyl-tRNA(Gly) + AMP + diphosphate. The polypeptide is Glycine--tRNA ligase alpha subunit (Sulfurihydrogenibium sp. (strain YO3AOP1)).